Consider the following 886-residue polypeptide: MDLSDSPKGIETHTPMMQQYLRIKADHPDTLVFYRMGDFYELFFEDAEKAARLLDLTLTQRGASAGNPIKMAGVPHHAVEQYLAKLVKMGESVAICEQIGDPATSKGPVERKVVRVVTPGTLTDAALLSDKNDVYLLAMYTGHNKRGVAVNIGLAWLNLASGALRLAEIEPDQLGAALERIRPAEILTADGATDAVPAGAGAVKRVPAWHFDIASGTQRLCDQLDVAGLDGFGAHSLTSACGAAGALLLYAAATQGQQLRHVRSLKVESETEYIGLDPATRRNLELTETLRGTESPTLYSLLDTCCTTMGSRLLRHWLHHPPRASVAAQSRQQAIGALLDAPADANLDALRSALRQIADVERITGRLALLSARPRDLSSLRDTFAALPALRERISAIVANADALARVDAALAPPAECLDLLTSAIAPEPAAMVRDGGVIARGYDAELDELRDISENCGQFLIDLEARERARTGIANLRVEYNKVHGFYIEVTRGQTDKVPDDYRRRQTLKNAERYITPELKTFEDKALSAQERALARERALYDGVLQALLPFIPECQRVASALAELDVLAAFAERARTLDWVAPTFTDDIGIEIEQGRHPVVEAQVEQFIANDCRFGADRKLLLITGPNMGGKSTFMRQTALIALMAYVGSYVPAKSACFGPIDRIFTRIGAADDLAGGRSTFMVEMTEAAAILNDATPQSLVLMDEIGRGTSTFDGLALAWAIARHLLAQNGCYTLFATHYFELTQLPSEFPQAANVHLSAVEHGHGIVFLHAVNEGPANQSYGLQVAQLAGVPAPVIRAARKHLAYLEQQSAAQHTPQLDLFSAPPAAADDVECADAPAPSDATHPALDRLRDIDPDDLKPREALDLLYELRTLVRSHDADGHA.

Residue 627-634 (GPNMGGKS) participates in ATP binding. Positions 834 to 857 (VECADAPAPSDATHPALDRLRDID) are disordered.

The protein belongs to the DNA mismatch repair MutS family.

Its function is as follows. This protein is involved in the repair of mismatches in DNA. It is possible that it carries out the mismatch recognition step. This protein has a weak ATPase activity. The polypeptide is DNA mismatch repair protein MutS (Burkholderia vietnamiensis (strain G4 / LMG 22486) (Burkholderia cepacia (strain R1808))).